The primary structure comprises 225 residues: MGYWNSKVVPKFKKLFEKNSAKKAAAAEATKTFDESKETINKEIEEKKTELQPKVVETYEATSAEVKALVRDPKVAGLKKNSAAVQKYLEELVKIEFPGSKAVSEASSSFGAGYVAGPVTFIFEKVSVFLPEEVKTKEIPVEEVKAEEPAKTEEPAKTEGTSGEKEEIVEETKKGETPETAVVEEKKPEVEEKKEEATPAPAVVETPVKEPETTTTAPVAEPPKP.

The N-myristoyl glycine moiety is linked to residue Gly-2. At Thr-32 the chain carries Phosphothreonine. At Ser-107 the chain carries Phosphoserine. A compositionally biased stretch (basic and acidic residues) spans 140–197 (PVEEVKAEEPAKTEEPAKTEGTSGEKEEIVEETKKGETPETAVVEEKKPEVEEKKEEA). The disordered stretch occupies residues 140–225 (PVEEVKAEEP…TAPVAEPPKP (86 aa)). Residues Thr-152 and Thr-177 each carry the phosphothreonine modification.

This sequence belongs to the DREPP family. Interacts with Turnip mosaic virus (TuMV) P3N-PIPO. Cu(2+) is required as a cofactor. In terms of tissue distribution, mostly expressed in the basal region of hypocotyls. Expressed in seedlings, roots, shoots, stems, leaves (e.g. in epidermis and vascular tissues), flowers (e.g. in pistils and anthers) and siliques (at protein level).

It is found in the cell membrane. It localises to the cytoplasm. The protein resides in the cytoskeleton. The protein localises to the cell junction. Its subcellular location is the plasmodesma. Its function is as follows. May be involved in intracellular signaling through interaction with PtdInsPs and calmodulin (CaM); may keep PtdInsPs attached to the plasma membrane until Ca(2+)-CaM reaches a competitive concentration subsequent to an increase triggered by a stimulus, thus leading to PtdInsPs release and subsequent activation of InsPs-dependent signaling cascade. Interacts competitively at the N-terminus with calcium ions and CaM (in a calcium-dependent manner), and with the phosphatidylinositol phosphates PtdIns(3,4,5)P(3), PtdIns(3,4)P(2), PtdIns(4,5)P(2) and PtdIns(3,5)P(2). Also binds weakly to PtdIns(3)P, PtdIns(4)P and PtdIns(5)P. Negative regulator of hypocotyl cell elongation by destabilizing cortical microtubules in a calcium-dependent manner. Binds directly to and destabilized microtubules to enhance microtubule depolymerization when cytoplasmic calcium increases. In case of Turnip mosaic virus (TuMV) infection, confers sensitivity by promoting viral cell-to-cell movement through interaction with viral P3N-PIPO. This is Plasma membrane-associated cation-binding protein 1 (PCAP1) from Arabidopsis thaliana (Mouse-ear cress).